The primary structure comprises 907 residues: Nuclear receptor coactivator 7 (907 aa).

The segment covering M1–Q12 has biased composition (basic and acidic residues). Residues M1–E29 adopt a coiled-coil conformation. Disordered regions lie at residues M1–S51, D63–K83, and Y99–P121. Residues K25 to S41 show a composition bias toward polar residues. Basic and acidic residues-rich tracts occupy residues A68–E78 and Y99–M116. A LysM domain is found at I125–V168. Disordered stretches follow at residues L335 to E373 and D401 to G443. Residues D401–S422 show a composition bias toward basic and acidic residues. Positions A746–E907 constitute a TLDc domain.

Belongs to the OXR1 family.

Its subcellular location is the nucleus. In terms of biological role, enhances the transcriptional activities of several nuclear receptors. This is Nuclear receptor coactivator 7 (NCOA7) from Gallus gallus (Chicken).